A 227-amino-acid polypeptide reads, in one-letter code: Cytochrome c oxidase subunit 2 (227 aa).

The Mitochondrial intermembrane portion of the chain corresponds to 1–14 (MAYPLQLGFQDAVS). The chain crosses the membrane as a helical span at residues 15 to 45 (PIMEELLYFHDHTLMIVFLISSLVLYIITLM). The Mitochondrial matrix segment spans residues 46–59 (LTTKLTHTNTMNAQ). A helical transmembrane segment spans residues 60–87 (EVETVWTILPAIILILIALPSLRILYMM). The Mitochondrial intermembrane portion of the chain corresponds to 88–227 (DEINNPSLTV…TFEKWTASLL (140 aa)). The Cu cation site is built by H161, C196, E198, C200, H204, and M207. E198 contacts Mg(2+).

Belongs to the cytochrome c oxidase subunit 2 family. In terms of assembly, component of the cytochrome c oxidase (complex IV, CIV), a multisubunit enzyme composed of 14 subunits. The complex is composed of a catalytic core of 3 subunits MT-CO1, MT-CO2 and MT-CO3, encoded in the mitochondrial DNA, and 11 supernumerary subunits COX4I, COX5A, COX5B, COX6A, COX6B, COX6C, COX7A, COX7B, COX7C, COX8 and NDUFA4, which are encoded in the nuclear genome. The complex exists as a monomer or a dimer and forms supercomplexes (SCs) in the inner mitochondrial membrane with NADH-ubiquinone oxidoreductase (complex I, CI) and ubiquinol-cytochrome c oxidoreductase (cytochrome b-c1 complex, complex III, CIII), resulting in different assemblies (supercomplex SCI(1)III(2)IV(1) and megacomplex MCI(2)III(2)IV(2)). Found in a complex with TMEM177, COA6, COX18, COX20, SCO1 and SCO2. Interacts with TMEM177 in a COX20-dependent manner. Interacts with COX20. Interacts with COX16. It depends on Cu cation as a cofactor.

Its subcellular location is the mitochondrion inner membrane. The catalysed reaction is 4 Fe(II)-[cytochrome c] + O2 + 8 H(+)(in) = 4 Fe(III)-[cytochrome c] + 2 H2O + 4 H(+)(out). Its function is as follows. Component of the cytochrome c oxidase, the last enzyme in the mitochondrial electron transport chain which drives oxidative phosphorylation. The respiratory chain contains 3 multisubunit complexes succinate dehydrogenase (complex II, CII), ubiquinol-cytochrome c oxidoreductase (cytochrome b-c1 complex, complex III, CIII) and cytochrome c oxidase (complex IV, CIV), that cooperate to transfer electrons derived from NADH and succinate to molecular oxygen, creating an electrochemical gradient over the inner membrane that drives transmembrane transport and the ATP synthase. Cytochrome c oxidase is the component of the respiratory chain that catalyzes the reduction of oxygen to water. Electrons originating from reduced cytochrome c in the intermembrane space (IMS) are transferred via the dinuclear copper A center (CU(A)) of subunit 2 and heme A of subunit 1 to the active site in subunit 1, a binuclear center (BNC) formed by heme A3 and copper B (CU(B)). The BNC reduces molecular oxygen to 2 water molecules using 4 electrons from cytochrome c in the IMS and 4 protons from the mitochondrial matrix. The chain is Cytochrome c oxidase subunit 2 (MT-CO2) from Hippopotamus amphibius (Hippopotamus).